The sequence spans 168 residues: Peptide deformylase 2 (168 aa).

Cysteine 91 and histidine 133 together coordinate Fe cation. Glutamate 134 is an active-site residue. Histidine 137 contributes to the Fe cation binding site.

The protein belongs to the polypeptide deformylase family. Fe(2+) serves as cofactor.

It carries out the reaction N-terminal N-formyl-L-methionyl-[peptide] + H2O = N-terminal L-methionyl-[peptide] + formate. Its function is as follows. Removes the formyl group from the N-terminal Met of newly synthesized proteins. Requires at least a dipeptide for an efficient rate of reaction. N-terminal L-methionine is a prerequisite for activity but the enzyme has broad specificity at other positions. This is Peptide deformylase 2 from Vibrio parahaemolyticus serotype O3:K6 (strain RIMD 2210633).